Consider the following 862-residue polypeptide: Solute carrier family 4 member 11 (862 aa).

Residues 1-343 (MSQNEHCQDS…IIGKSKSVGK (343 aa)) lie on the Cytoplasmic side of the membrane. The chain crosses the membrane as a helical span at residues 344-366 (YVTTTLFLYFACLLPTIAFGSLN). Topologically, residues 367 to 379 (DENTNGAIDVQKT) are extracellular. A helical membrane pass occupies residues 380–393 (IAGQSIGGLLYALF). At 394–398 (SGQPL) the chain is on the cytoplasmic side. The chain crosses the membrane as a helical span at residues 399 to 415 (VILLTTAPLAIYTQVIR). The Extracellular portion of the chain corresponds to 416 to 428 (VICDDYNLDFNAF). A helical transmembrane segment spans residues 429-452 (YAWTGLWNSFFLALYAFLNLSLLM). The Cytoplasmic segment spans residues 453–460 (NLFKRSTE). A helical transmembrane segment spans residues 461–481 (EIIALFISITFVLDAVKGMVK). Topologically, residues 482–542 (IFGKYYYGHH…SSPGSTHSGQ (61 aa)) are extracellular. Residues Asn-511 and Asn-519 are each glycosylated (N-linked (GlcNAc...) asparagine). The helical transmembrane segment at 543–564 (ATAVLSLLIMLGTLWLGYTLYQ) threads the bilayer. Topologically, residues 565–577 (FKKSPYLHPCVRE) are cytoplasmic. Residues 578–599 (TLSDCALPIAVLSFSLIGSYGF) traverse the membrane as a helical segment. At 600-627 (QEIEMSKFRYNPSESLFEVAQIHSLSFK) the chain is on the extracellular side. A helical transmembrane segment spans residues 628–645 (AIGSAMGLGFLLSLLFFI). Topologically, residues 646-670 (EQNLVAALVNAPENRLVKGTAYHWD) are cytoplasmic. A helical membrane pass occupies residues 671 to 691 (LLLLAIINTGLSLFGLPWIHA). Residues 692–721 (AYPHSPLHVRALALVEERVENGHIYETIVD) lie on the Extracellular side of the membrane. Residues 722-746 (VKETRLTALGASVLVGLSLLLLPFP) traverse the membrane as a helical segment. At 747 to 752 (LQWIPK) the chain is on the cytoplasmic side. The chain crosses the membrane as a helical span at residues 753 to 770 (PVLYGLFLYIALTSLDGN). The Extracellular segment spans residues 771 to 774 (QLFS). The chain crosses the membrane as a helical span at residues 775–797 (RVALLLKEQTSYPPTHYIRRVPQ). Residues 798-802 (RKIHY) lie on the Cytoplasmic side of the membrane. A helical transmembrane segment spans residues 803–819 (FTGLQILQLLLLCAFGM). At 820–823 (SSLP) the chain is on the extracellular side. Residues 824–844 (YMKMVFPLIMIAMIPIRYNLL) form a helical membrane-spanning segment. Over 845-862 (PRIIEAKYLDVMDAEHRP) the chain is Cytoplasmic.

This sequence belongs to the anion exchanger (TC 2.A.31) family. In terms of assembly, homodimer. In terms of processing, glycosylated. Expressed in the endothelial cells of the cornea. In the inner ear, is located in fibrocytes underlying the stria vascularis. In the kidney, is expressed in the thin descending limb of Henle loop.

It is found in the cell membrane. The protein localises to the basolateral cell membrane. It catalyses the reaction tetrahydroxoborate(in) + 2 Na(+)(in) = tetrahydroxoborate(out) + 2 Na(+)(out). Its function is as follows. Multifunctional transporter with an impact in cell morphology and differentiation. In the presence of borate B(OH)4(-), acts as a voltage-dependent electrogenic Na(+)-coupled B(OH)4(-) cotransporter controlling boron homeostasis. At early stages of stem cell differentiation, participates in synergy with ITGA5-ITGB1 and ITGAV-ITGB3 integrins and BMPR1A to promote cell adhesion and contractility that drives differentiation toward osteogenic commitment while inhibiting adipogenesis. In the absence of B(OH)4(-), acts as a Na(+)-coupled OH(-) or H(+) permeable channel with implications in cellular redox balance. Regulates the oxidative stress response in corneal endothelium by enhancing antioxidant defenses and protecting cells from reactive oxygen species. In response to hypo-osmotic challenge, also acts as water permeable channel at the basolateral cell membrane of corneal endothelial cells and facilitates transendothelial fluid reabsorption in the aqueous humor. In the presence of ammonia, acts as an electrogenic NH3/H(+) cotransporter and may play a role in ammonia transport and reabsorption in renal Henle's loop epithelium. This Mus musculus (Mouse) protein is Solute carrier family 4 member 11 (Slc4a11).